A 261-amino-acid polypeptide reads, in one-letter code: Undecaprenyl-diphosphatase (261 aa).

Helical transmembrane passes span 39–59, 76–96, 99–119, 173–193, 206–226, and 238–258; these read NVLL…LIIF, LLII…KDFF, LFVS…ILWL, AAKF…VLDL, IDLM…YFAV, and LTWF…LQAA.

Belongs to the UppP family.

Its subcellular location is the cell membrane. It catalyses the reaction di-trans,octa-cis-undecaprenyl diphosphate + H2O = di-trans,octa-cis-undecaprenyl phosphate + phosphate + H(+). Functionally, catalyzes the dephosphorylation of undecaprenyl diphosphate (UPP). Confers resistance to bacitracin. The polypeptide is Undecaprenyl-diphosphatase (Carboxydothermus hydrogenoformans (strain ATCC BAA-161 / DSM 6008 / Z-2901)).